An 83-amino-acid chain; its full sequence is Large ribosomal subunit protein bL31B (83 aa).

Belongs to the bacterial ribosomal protein bL31 family. Type B subfamily. As to quaternary structure, part of the 50S ribosomal subunit.

Functionally, binds the 23S rRNA. The polypeptide is Large ribosomal subunit protein bL31B (Lactobacillus delbrueckii subsp. bulgaricus (strain ATCC 11842 / DSM 20081 / BCRC 10696 / JCM 1002 / NBRC 13953 / NCIMB 11778 / NCTC 12712 / WDCM 00102 / Lb 14)).